Here is a 534-residue protein sequence, read N- to C-terminus: Transcription factor RBF1 (534 aa).

Positions 1–36 (MSSNKNQSDLNIPTNSASLKQKQRQQLGIKSEIGAS) are disordered. A coiled-coil region spans residues 77–147 (AAAAELQHRA…YQQQQQLHQL (71 aa)). Disordered stretches follow at residues 262–285 (ANLY…HNEE), 353–372 (QQQQ…QQAA), 402–439 (QLSQ…PHGL), and 477–534 (TQGN…SGFL). The span at 267-285 (NEKDQKRKNKPDEPGHNEE) shows a compositional bias: basic and acidic residues. Residues 332-386 (HHLLQQEQQQQQQQQQQQQQQQQQQQQQQHNANSQAQQQAAQLQQQMQQQLQASG) adopt a coiled-coil conformation. Low complexity predominate over residues 402 to 435 (QLSQQQSQQQQLHHIPQQRQRTQSQQSQQQPQQT).

This sequence belongs to the RBF1 family.

It is found in the nucleus. It localises to the chromosome. Its subcellular location is the telomere. Transcriptional activator that binds to the RPG box and to telomeres. Involved in the regulation of the transition between yeast and filamentous forms and plays a role in virulence. Induces expression of HWP1, a major hyphal cell protein and virulence factor. The chain is Transcription factor RBF1 (RBF1) from Candida albicans (strain SC5314 / ATCC MYA-2876) (Yeast).